The chain runs to 155 residues: Ribosomal RNA large subunit methyltransferase H (155 aa).

S-adenosyl-L-methionine-binding positions include Leu-73, Gly-104, and 123 to 128 (LSPLTL).

Belongs to the RNA methyltransferase RlmH family. In terms of assembly, homodimer.

Its subcellular location is the cytoplasm. The catalysed reaction is pseudouridine(1915) in 23S rRNA + S-adenosyl-L-methionine = N(3)-methylpseudouridine(1915) in 23S rRNA + S-adenosyl-L-homocysteine + H(+). Specifically methylates the pseudouridine at position 1915 (m3Psi1915) in 23S rRNA. The protein is Ribosomal RNA large subunit methyltransferase H of Azotobacter vinelandii (strain DJ / ATCC BAA-1303).